The chain runs to 228 residues: MKYTNIREGQFLSRPNRFIAKVEIDGKEEICHVKNTGRCRELLIPGVTVFLQEADFEHRKTKYDLIGVRKGNRLINMDSQVPNKVFREWLEKGYFQELQHIKQEQTFRNSRFDFYLEAGQRKIFVEVKGVTLEEEGVALFPDAPTERGVKHLRELSQAVAAGYEAYVVFIIQMKDIHYFTPNIKTHQAFGDSLIQAEKQGVKILALDCEVTEDSIEAGDFVTVKLVEG.

Belongs to the SfsA family.

This is Sugar fermentation stimulation protein homolog from Desulfitobacterium hafniense (strain DSM 10664 / DCB-2).